The chain runs to 128 residues: Large ribosomal subunit protein bL19 (128 aa).

It belongs to the bacterial ribosomal protein bL19 family.

In terms of biological role, this protein is located at the 30S-50S ribosomal subunit interface and may play a role in the structure and function of the aminoacyl-tRNA binding site. The polypeptide is Large ribosomal subunit protein bL19 (Aromatoleum aromaticum (strain DSM 19018 / LMG 30748 / EbN1) (Azoarcus sp. (strain EbN1))).